The chain runs to 621 residues: DnaJ homolog subfamily C member 2 (621 aa).

An N-acetylmethionine modification is found at M1. The epitope (recognized by CD8(+) cytotoxic T-lymphocytes) stretch occupies residues 23-31 (STLCQVEPV). A phosphoserine mark is found at S47, S49, S60, and S63. Residues 88 to 161 (DHYAVLGLGH…VKRRAFNSVD (74 aa)) enclose the J domain. The ZRF1-UBD stretch occupies residues 160 to 250 (VDPTFDNSVP…RDERRWIEKQ (91 aa)). Disordered stretches follow at residues 294–315 (EKKA…QRQA) and 426–453 (KEEA…GSKN). SANT domains follow at residues 449 to 511 (NGSK…KLDP) and 549 to 604 (TDFT…EMVK).

In terms of assembly, component of ribosome-associated complex (RAC), a heterodimer composed of Hsp70/DnaK-type chaperone HSPA14 and Hsp40/DnaJ-type chaperone DNAJC2. Interacts (via ZRF1-UBD region) with ID1. In terms of processing, phosphorylated in M (mitotic) phase. In terms of tissue distribution, widely expressed.

It is found in the nucleus. Its subcellular location is the cytoplasm. The protein resides in the cytosol. Acts both as a chaperone in the cytosol and as a chromatin regulator in the nucleus. When cytosolic, acts as a molecular chaperone: component of the ribosome-associated complex (RAC), a complex involved in folding or maintaining nascent polypeptides in a folding-competent state. In the RAC complex, stimulates the ATPase activity of the ribosome-associated pool of Hsp70-type chaperones HSPA14 that bind to the nascent polypeptide chain. When nuclear, mediates the switching from polycomb-repressed genes to an active state: specifically recruited at histone H2A ubiquitinated at 'Lys-119' (H2AK119ub), and promotes the displacement of the polycomb PRC1 complex from chromatin, thereby facilitating transcription activation. This is DnaJ homolog subfamily C member 2 (DNAJC2) from Homo sapiens (Human).